The primary structure comprises 463 residues: MAQVSINSDYSEWGSSTDAGERARLLQSPCVDVVPKREGEASPGDPDSGTTSTLGAVFIVVNACLGAGLLNFPAAFSTAGGVAAGIALQMGMLVFIISGLVILAYCSQASNERTYQEVVWAVCGKLTGVLCEIAIAVYTFGTCIAFLIIIGDQQDKIIAVMAKEPDGASGSPWYTDRKFTISLTAFLFILPLSIPKEIGFQKYASSLSVVGTWYVTAIVIIKYIWPDKEMRPGDILTRPASWMAVFNAMPTICFGFQCHVSSVPVFNSMRQPQVKTWGGVVTAAMVIALAVYMGTGICGFLTFGAAVDPDVLRSYPSEDVAVAVARAFIILSVLTSYPILHFCGRAVVEGLWLRYKGTPVEEDVGRERRRRVLQTLVWFLLTLLLALFIPDIGKVISVIGGLAACFIFIFPGLCLIQAKLSEMEEVKPASWWALVSYGVLLVTLGAFIFGQTTANAVFVDLLA.

Serine 28 is subject to Phosphoserine. The next 11 helical transmembrane spans lie at 56-76 (AVFI…PAAF), 82-102 (VAAG…GLVI), 130-150 (LCEI…LIII), 179-199 (FTIS…KEIG), 206-226 (SLSV…YIWP), 240-260 (ASWM…QCHV), 283-303 (AAMV…FLTF), 320-340 (VAVA…YPIL), 372-392 (VLQT…IPDI), 396-416 (ISVI…LCLI), and 429-449 (ASWW…AFIF).

The protein belongs to the amino acid/polyamine transporter 2 family. As to quaternary structure, interacts with the mTORC1 complex; this interaction mediates the recruitment of mTORC1 to the lysosome and its subsequent activation.

The protein localises to the lysosome membrane. The protein resides in the cell projection. It localises to the axon. It catalyses the reaction L-asparagine(in) + Na(+)(in) = L-asparagine(out) + Na(+)(out). The catalysed reaction is L-glutamine(in) + Na(+)(in) = L-glutamine(out) + Na(+)(out). Symporter that selectively cotransports sodium ions and amino acids, such as L-glutamine and L-asparagine from the lysosome into the cytoplasm and may participates in mTORC1 activation. The transport activity requires an acidic lysosomal lumen. In Rattus norvegicus (Rat), this protein is Sodium-coupled neutral amino acid transporter 7.